A 355-amino-acid polypeptide reads, in one-letter code: tRNA (guanine-N(1)-)-methyltransferase (355 aa).

Residues glycine 109 and 129-134 (IGDYVL) contribute to the S-adenosyl-L-methionine site.

This sequence belongs to the RNA methyltransferase TrmD family. Homodimer.

Its subcellular location is the cytoplasm. It catalyses the reaction guanosine(37) in tRNA + S-adenosyl-L-methionine = N(1)-methylguanosine(37) in tRNA + S-adenosyl-L-homocysteine + H(+). Functionally, specifically methylates guanosine-37 in various tRNAs. This chain is tRNA (guanine-N(1)-)-methyltransferase, found in Chlamydia abortus (strain DSM 27085 / S26/3) (Chlamydophila abortus).